We begin with the raw amino-acid sequence, 1030 residues long: MMS19 nucleotide excision repair protein homolog (1030 aa).

At alanine 2 the chain carries N-acetylalanine. HEAT repeat units follow at residues 866–904 (QRFF…RLPK), 908–946 (LPEL…EAPQ), 949–987 (SLHV…LPTP), and 990–1028 (LPYK…LGSP). Phosphoserine is present on serine 1027.

The protein belongs to the MET18/MMS19 family. Component of the CIA complex. In the CIA complex, interacts directly with CIAO2B and CIAO3. Component of the MMXD complex, composed of CIAO1, ERCC2, CIAO2B, MMS19 and SLC25A5. Interacts with CIAO2B; the interaction is direct. Interacts with ERCC2/XPD; the interaction is direct. Interacts with ERCC3/XPB and NCOA3/RAC3. Interacts with RTEL1; the interaction mediates the association of RTEL1 with the CIA complex. Interacts with BRIP1. Interacts with KIF4A; the interaction facilitates the transfer of Fe-S clusters to KIF4A to ensure proper localization of KIF4A to the mitotic machinery components. Interacts with CCDC117; the interaction is indirect. In terms of processing, ubiquitinated; undergoes 'Lys-48'-linked polyubiquitination.

The protein resides in the nucleus. The protein localises to the cytoplasm. It is found in the cytoskeleton. It localises to the spindle. Its function is as follows. Key component of the cytosolic iron-sulfur protein assembly (CIA) complex, a multiprotein complex that mediates the incorporation of iron-sulfur cluster into apoproteins specifically involved in DNA metabolism and genomic integrity. In the CIA complex, MMS19 acts as an adapter between early-acting CIA components and a subset of cellular target Fe/S proteins such as ERCC2/XPD, FANCJ and RTEL1, thereby playing a key role in nucleotide excision repair (NER), homologous recombination-mediated double-strand break DNA repair, DNA replication and RNA polymerase II (POL II) transcription. As a CIA complex component and in collaboration with CIAO1 and CIAO2, binds to and facilitates the assembly of most cytosolic-nuclear Fe/S proteins. As part of the mitotic spindle-associated MMXD complex, plays a role in chromosome segregation, probably by facilitating iron-sulfur cluster assembly into ERCC2/XPD. Together with CIAO2, facilitates the transfer of Fe-S clusters to the motor protein KIF4A, which ensures proper localization of KIF4A to mitotic machinery components to promote the progression of mitosis. Indirectly acts as a transcriptional coactivator of estrogen receptor (ER), via its role in iron-sulfur insertion into some component of the TFIIH-machinery. The chain is MMS19 nucleotide excision repair protein homolog from Bos taurus (Bovine).